Consider the following 490-residue polypeptide: Sushi domain-containing protein 4 (490 aa).

The disordered stretch occupies residues 1–20; sequence MYHGMNPSNGDGFLEQQLQQ. The first 41 residues, 1-41, serve as a signal peptide directing secretion; that stretch reads MYHGMNPSNGDGFLEQQLQQQQPQSPQRLLAVILWFQLALC. Over 42–319 the chain is Extracellular; that stretch reads FGPAQLTGGF…PSTHETLLTT (278 aa). Sushi domains lie at 55–119, 120–179, 178–239, and 241–304; these read NVCA…VCIQ, EDCR…ICQG, QGCL…RCLA, and EVCP…YCIK. 8 disulfide bridges follow: cysteine 57-cysteine 99, cysteine 85-cysteine 117, cysteine 122-cysteine 165, cysteine 147-cysteine 177, cysteine 180-cysteine 224, cysteine 210-cysteine 237, cysteine 243-cysteine 289, and cysteine 274-cysteine 302. N-linked (GlcNAc...) asparagine glycosylation is found at asparagine 104 and asparagine 134. The N-linked (GlcNAc...) asparagine glycan is linked to asparagine 192. The helical transmembrane segment at 320–340 threads the bilayer; that stretch reads WKIVAFTATSVLLVLLLVILA. Residues 341-490 are Cytoplasmic-facing; it reads RMFQTKFKAH…DEIPLMEEDP (150 aa). The disordered stretch occupies residues 394–490; that stretch reads YPASVGQGCP…DEIPLMEEDP (97 aa). 2 stretches are compositionally biased toward polar residues: residues 430-444 and 461-475; these read CDSTSGSSEMLQSLY and DTISSTAGEVASTSP. Residues 479–490 show a composition bias toward acidic residues; it reads IADEIPLMEEDP.

High expression in brain and eye, with weaker expression in spinal cord and testis. Detected in white matter of brain and in the outer segments of photoreceptors.

It is found in the membrane. In terms of biological role, acts as a complement inhibitor by disrupting the formation of the classical C3 convertase. Isoform 3 inhibits the classical complement pathway, while membrane-bound isoform 1 inhibits deposition of C3b via both the classical and alternative complement pathways. The polypeptide is Sushi domain-containing protein 4 (Susd4) (Mus musculus (Mouse)).